The primary structure comprises 446 residues: Protein IQ-DOMAIN 19 (446 aa).

The disordered stretch occupies residues 93–140 (IPGTPKEKRRWSFRRSSATGPPPPACAITLKDSPPPPPPPPPPPPLQQ). A compositionally biased stretch (pro residues) spans 125–139 (SPPPPPPPPPPPPLQ). IQ domains follow at residues 163–191 (EEFA…GLVK) and 192–214 (LQAL…CMQA). Residues 214–231 (ALITLQAKAREQRIRMIG) are calmodulin-binding. Residues 332-345 (QSSKAKARSQSAPK) are compositionally biased toward low complexity. The interval 332–398 (QSSKAKARSQ…TAKESQQHHH (67 aa)) is disordered. Residues 379 to 392 (QRSSSQLGSNTAKE) are compositionally biased toward polar residues.

This sequence belongs to the IQD family. Binds to multiple calmodulin (CaM) in the presence of Ca(2+) and CaM-like proteins.

It localises to the cytoplasm. Its subcellular location is the cytoskeleton. It is found in the cell membrane. Its function is as follows. May be involved in cooperative interactions with calmodulins or calmodulin-like proteins. Recruits calmodulin proteins to microtubules, thus being a potential scaffold in cellular signaling and trafficking. Acts as a positive regulator of trichome branch initiation. May associate with nucleic acids and regulate gene expression at the transcriptional or post-transcriptional level. The chain is Protein IQ-DOMAIN 19 from Arabidopsis thaliana (Mouse-ear cress).